Consider the following 1361-residue polypeptide: DNA-directed RNA polymerase subunit beta'' (1361 aa).

Zn(2+) contacts are provided by C224, C295, C302, and C305.

This sequence belongs to the RNA polymerase beta' chain family. RpoC2 subfamily. In plastids the minimal PEP RNA polymerase catalytic core is composed of four subunits: alpha, beta, beta', and beta''. When a (nuclear-encoded) sigma factor is associated with the core the holoenzyme is formed, which can initiate transcription. Zn(2+) serves as cofactor.

It is found in the plastid. It localises to the chloroplast. It catalyses the reaction RNA(n) + a ribonucleoside 5'-triphosphate = RNA(n+1) + diphosphate. In terms of biological role, DNA-dependent RNA polymerase catalyzes the transcription of DNA into RNA using the four ribonucleoside triphosphates as substrates. The chain is DNA-directed RNA polymerase subunit beta'' from Spinacia oleracea (Spinach).